Consider the following 340-residue polypeptide: Short-chain dehydrogenase/reductase ffsI (340 aa).

NADP(+) is bound by residues Leu-46, Arg-71, Asp-96, Asn-123, Tyr-211, and Lys-215. Residue Tyr-211 is the Proton acceptor of the active site. Lys-215 serves as the catalytic Lowers pKa of active site Tyr.

This sequence belongs to the short-chain dehydrogenases/reductases (SDR) family.

Its pathway is mycotoxin biosynthesis. Its function is as follows. Short-chain dehydrogenase/reductase; part of the gene cluster that mediates the biosynthesis of the cytotoxic leucine-containing cytochalasans, including aspochalasin C, aspochalasin E, TMC-169, flavichalasine F, aspergillin PZ, aspochalasin M and flavichalasine G. The first step in the pathway is catalyzed by the hybrid PKS-NRPS ffsA that utilizes 8 units of malonyl-CoA to iteratively assemble the octaketide chain before addition of L-leucine by the C-terminal NRPS modules. Because ffsA lacks a designated enoylreductase (ER) domain, the required activity is provided the enoyl reductase fssC. The methyltransferase (MT) domain of ffsA catalyzes the alpha-methylation at C10 and C14 using S-adenosyl-L-methionine as the methyl-donating cosubstrate. Reduction by the hydrolyase ffsE, followed by dehydration and intra-molecular Diels-Alder cyclization by the Diels-Alderase ffsF then yield the required isoindolone-fused macrocycle. A number of oxidative steps catalyzed by the tailoring cytochrome P450 monooxygenase ffsD, the FAD-linked oxidoreductase ffsJ and the short-chain dehydrogenase/reductase ffsI, are further required to afford the final products. The polypeptide is Short-chain dehydrogenase/reductase ffsI (Aspergillus flavipes).